Here is a 504-residue protein sequence, read N- to C-terminus: Glucose-6-phosphate isomerase (504 aa).

The active-site Proton donor is the glutamate 333. Residues histidine 364 and lysine 473 contribute to the active site.

Belongs to the GPI family.

The protein localises to the cytoplasm. The catalysed reaction is alpha-D-glucose 6-phosphate = beta-D-fructose 6-phosphate. It functions in the pathway carbohydrate biosynthesis; gluconeogenesis. Its pathway is carbohydrate degradation; glycolysis; D-glyceraldehyde 3-phosphate and glycerone phosphate from D-glucose: step 2/4. In terms of biological role, catalyzes the reversible isomerization of glucose-6-phosphate to fructose-6-phosphate. The polypeptide is Glucose-6-phosphate isomerase (Xanthomonas euvesicatoria pv. vesicatoria (strain 85-10) (Xanthomonas campestris pv. vesicatoria)).